A 245-amino-acid polypeptide reads, in one-letter code: 3-deoxy-manno-octulosonate cytidylyltransferase (245 aa).

This sequence belongs to the KdsB family.

Its subcellular location is the cytoplasm. The catalysed reaction is 3-deoxy-alpha-D-manno-oct-2-ulosonate + CTP = CMP-3-deoxy-beta-D-manno-octulosonate + diphosphate. The protein operates within nucleotide-sugar biosynthesis; CMP-3-deoxy-D-manno-octulosonate biosynthesis; CMP-3-deoxy-D-manno-octulosonate from 3-deoxy-D-manno-octulosonate and CTP: step 1/1. It participates in bacterial outer membrane biogenesis; lipopolysaccharide biosynthesis. Activates KDO (a required 8-carbon sugar) for incorporation into bacterial lipopolysaccharide in Gram-negative bacteria. This Rhodopseudomonas palustris (strain ATCC BAA-98 / CGA009) protein is 3-deoxy-manno-octulosonate cytidylyltransferase.